Here is a 286-residue protein sequence, read N- to C-terminus: Pyridoxal kinase PdxY (286 aa).

Substrate-binding positions include Ser9 and 44–45 (TQ). Residues Asp111, Ala143, Glu148, Lys181, and 208–211 (RPLV) contribute to the ATP site. Asp223 lines the substrate pocket.

This sequence belongs to the pyridoxine kinase family. PdxY subfamily. In terms of assembly, homodimer. The cofactor is Mg(2+).

It carries out the reaction pyridoxal + ATP = pyridoxal 5'-phosphate + ADP + H(+). The protein operates within cofactor metabolism; pyridoxal 5'-phosphate salvage; pyridoxal 5'-phosphate from pyridoxal: step 1/1. Its function is as follows. Pyridoxal kinase involved in the salvage pathway of pyridoxal 5'-phosphate (PLP). Catalyzes the phosphorylation of pyridoxal to PLP. This is Pyridoxal kinase PdxY from Salmonella choleraesuis (strain SC-B67).